A 1074-amino-acid polypeptide reads, in one-letter code: Transmembrane protein 132E (1074 aa).

A signal peptide spans 1–23 (MAPGMSGRRGAALLCLSVLLAHA). Residues 26-894 (RSHPASPSPP…LTDLEIGMYA (869 aa)) are Extracellular-facing. N-linked (GlcNAc...) asparagine glycans are attached at residues N70 and N91. 2 disordered regions span residues 205 to 224 (PAAP…PEAA) and 243 to 266 (GGCG…ESPT). Positions 247 to 262 (SARRGPGPGPGAAARA) are enriched in low complexity. Residues N320 and N401 are each glycosylated (N-linked (GlcNAc...) asparagine). 2 disordered regions span residues 564–587 (RRSA…ANRG) and 816–867 (GRDE…PVPP). Low complexity predominate over residues 843 to 854 (GAGPPGTAIPAG). The chain crosses the membrane as a helical span at residues 895-915 (LLGVFCLAILVFLINCIVFVL). At 916–1074 (RYRHKRIPPE…NYMRRIKDIA (159 aa)) the chain is on the cytoplasmic side. Positions 962–1064 (VPACCHGDHH…TRPTPPPDLH (103 aa)) are disordered. 2 stretches are compositionally biased toward low complexity: residues 973-985 (SGSS…SQVH) and 1016-1026 (FTTFTTLPTEE). The segment covering 1035 to 1044 (GEEEDEEEDL) has biased composition (acidic residues).

The protein belongs to the TMEM132 family. Widely expressed, with highest levels in the cochlea. In the cochlea, detected in spiral ganglion, the organ of Corti and stria vascularis. In the organ of Corti, prominently expressed in the outer and inner hair cells, especially at the apical and basal region of the outer hair cell body (at protein level).

It localises to the membrane. Required for normal inner ear hair cell function and hearing. The polypeptide is Transmembrane protein 132E (Tmem132e) (Mus musculus (Mouse)).